Reading from the N-terminus, the 274-residue chain is Bis(5'-nucleosyl)-tetraphosphatase, symmetrical (274 aa).

This sequence belongs to the Ap4A hydrolase family.

The enzyme catalyses P(1),P(4)-bis(5'-adenosyl) tetraphosphate + H2O = 2 ADP + 2 H(+). Hydrolyzes diadenosine 5',5'''-P1,P4-tetraphosphate to yield ADP. This chain is Bis(5'-nucleosyl)-tetraphosphatase, symmetrical, found in Shewanella sp. (strain MR-7).